A 334-amino-acid polypeptide reads, in one-letter code: Ornithine carbamoyltransferase (334 aa).

Residues 57–60, glutamine 84, arginine 108, and 135–138 contribute to the carbamoyl phosphate site; these read STRT and HPTQ. Residues asparagine 169, aspartate 233, and 237-238 each bind L-ornithine; that span reads SM. Carbamoyl phosphate contacts are provided by residues 275–276 and arginine 320; that span reads CL.

This sequence belongs to the aspartate/ornithine carbamoyltransferase superfamily. OTCase family.

It localises to the cytoplasm. It carries out the reaction carbamoyl phosphate + L-ornithine = L-citrulline + phosphate + H(+). It functions in the pathway amino-acid biosynthesis; L-arginine biosynthesis; L-arginine from L-ornithine and carbamoyl phosphate: step 1/3. Its function is as follows. Reversibly catalyzes the transfer of the carbamoyl group from carbamoyl phosphate (CP) to the N(epsilon) atom of ornithine (ORN) to produce L-citrulline. The protein is Ornithine carbamoyltransferase of Vibrio campbellii (strain ATCC BAA-1116).